The sequence spans 369 residues: UDP-N-acetylglucosamine--N-acetylmuramyl-(pentapeptide) pyrophosphoryl-undecaprenol N-acetylglucosamine transferase (369 aa).

UDP-N-acetyl-alpha-D-glucosamine contacts are provided by residues 10-12 (TGG), N124, R166, S196, and Q300.

It belongs to the glycosyltransferase 28 family. MurG subfamily.

It localises to the cell membrane. The enzyme catalyses di-trans,octa-cis-undecaprenyl diphospho-N-acetyl-alpha-D-muramoyl-L-alanyl-D-glutamyl-meso-2,6-diaminopimeloyl-D-alanyl-D-alanine + UDP-N-acetyl-alpha-D-glucosamine = di-trans,octa-cis-undecaprenyl diphospho-[N-acetyl-alpha-D-glucosaminyl-(1-&gt;4)]-N-acetyl-alpha-D-muramoyl-L-alanyl-D-glutamyl-meso-2,6-diaminopimeloyl-D-alanyl-D-alanine + UDP + H(+). The protein operates within cell wall biogenesis; peptidoglycan biosynthesis. In terms of biological role, cell wall formation. Catalyzes the transfer of a GlcNAc subunit on undecaprenyl-pyrophosphoryl-MurNAc-pentapeptide (lipid intermediate I) to form undecaprenyl-pyrophosphoryl-MurNAc-(pentapeptide)GlcNAc (lipid intermediate II). This Desulfitobacterium hafniense (strain DSM 10664 / DCB-2) protein is UDP-N-acetylglucosamine--N-acetylmuramyl-(pentapeptide) pyrophosphoryl-undecaprenol N-acetylglucosamine transferase.